Reading from the N-terminus, the 248-residue chain is Probable transcriptional regulatory protein BOV_1660 (248 aa).

Belongs to the TACO1 family.

The protein resides in the cytoplasm. The polypeptide is Probable transcriptional regulatory protein BOV_1660 (Brucella ovis (strain ATCC 25840 / 63/290 / NCTC 10512)).